Here is a 28-residue protein sequence, read N- to C-terminus: Mast cell degranulating peptide (28 aa).

Disulfide bonds link C2–C18 and C4–C22.

As to expression, expressed by the venom gland.

The protein localises to the secreted. Its function is as follows. Mast cell degranulating peptide. This chain is Mast cell degranulating peptide, found in Bombus pensylvanicus (American bumblebee).